The sequence spans 194 residues: Phosphoheptose isomerase (194 aa).

Residues 37–194 (IANSFKQGGK…LIEFEMAKTA (158 aa)) form the SIS domain. 52–54 (NGG) contributes to the substrate binding site. Positions 61 and 65 each coordinate Zn(2+). Residues Glu-65, 93 to 94 (ND), 119 to 121 (STS), Ser-124, and Gln-172 each bind substrate. Residues Gln-172 and His-180 each contribute to the Zn(2+) site.

Belongs to the SIS family. GmhA subfamily. In terms of assembly, homotetramer. Zn(2+) serves as cofactor.

The protein localises to the cytoplasm. The enzyme catalyses 2 D-sedoheptulose 7-phosphate = D-glycero-alpha-D-manno-heptose 7-phosphate + D-glycero-beta-D-manno-heptose 7-phosphate. It functions in the pathway carbohydrate biosynthesis; D-glycero-D-manno-heptose 7-phosphate biosynthesis; D-glycero-alpha-D-manno-heptose 7-phosphate and D-glycero-beta-D-manno-heptose 7-phosphate from sedoheptulose 7-phosphate: step 1/1. It participates in bacterial outer membrane biogenesis; LOS core biosynthesis. Functionally, catalyzes the isomerization of sedoheptulose 7-phosphate in D-glycero-D-manno-heptose 7-phosphate. The protein is Phosphoheptose isomerase of Haemophilus ducreyi (strain 35000HP / ATCC 700724).